Reading from the N-terminus, the 1482-residue chain is Glutamate receptor ionotropic, NMDA 2B (1482 aa).

Positions 1-26 are cleaved as a signal peptide; that stretch reads MKPSAECCSPKFWLVLAVLAVSGSKA. Over 27 to 557 the chain is Extracellular; the sequence is RSQKSAPSIG…SAFLEPFSAD (531 aa). The N-linked (GlcNAc...) asparagine glycan is linked to Asn-74. A disulfide bond links Cys-86 and Cys-321. Zn(2+)-binding residues include His-127 and Glu-284. N-linked (GlcNAc...) asparagine glycans are attached at residues Asn-341, Asn-348, Asn-444, and Asn-491. Disulfide bonds link Cys-429–Cys-456 and Cys-436–Cys-457. The L-glutamate site is built by Thr-514 and Arg-519. Asn-542 is a glycosylation site (N-linked (GlcNAc...) asparagine). The chain crosses the membrane as a helical span at residues 558–576; sequence VWVMMFVMLLIVSAVAVFV. The Cytoplasmic segment spans residues 577–603; sequence FEYFSPVGYNRCLADGREPGGPSFTIG. An intramembrane region (discontinuously helical) is located at residues 604–623; sequence KAIWLLWGLVFNNSVPVQNP. Residues 604-623 are pore-forming; the sequence is KAIWLLWGLVFNNSVPVQNP. The Cytoplasmic portion of the chain corresponds to 624–630; that stretch reads KGTTSKI. The helical transmembrane segment at 631-646 threads the bilayer; it reads MVSVWAFFAVIFLASY. The Extracellular portion of the chain corresponds to 647 to 817; it reads TANLAAFMIQ…VMSSQLDIDN (171 aa). N-linked (GlcNAc...) asparagine glycosylation occurs at Asn-688. L-glutamate contacts are provided by residues 690 to 691 and Asp-732; that span reads ST. Cys-746 and Cys-801 are disulfide-bonded. A helical transmembrane segment spans residues 818-837; the sequence is MAGVFYMLGAAMALSLITFI. Topologically, residues 838-1482 are cytoplasmic; that stretch reads CEHLFYWQFR…EKLSSIESDV (645 aa). Residues Ser-882, Ser-886, Ser-917, and Ser-920 each carry the phosphoserine modification. Residues Tyr-962 and Tyr-1039 each carry the phosphotyrosine modification. Ser-1058, Ser-1061, and Ser-1064 each carry phosphoserine. The segment at 1074-1097 is disordered; that stretch reads EGNAAKRRKQQYKDSLKKRPASAK. Residues Tyr-1109 and Tyr-1133 each carry the phosphotyrosine modification. The residue at position 1143 (Ser-1143) is a Phosphoserine. Phosphotyrosine is present on Tyr-1155. Positions 1162-1194 are disordered; that stretch reads FKRDSVSGGGPCTNRSHLKHGTGDKHGVVGGVP. A phosphoserine mark is found at Ser-1255 and Ser-1259. Low complexity predominate over residues 1266 to 1277; sequence PAAPVAVSSNAS. Residues 1266–1301 are disordered; the sequence is PAAPVAVSSNASTTKYPQSPTNSKAQKKNRNKLRRQ. Positions 1278–1289 are enriched in polar residues; the sequence is TTKYPQSPTNSK. The segment covering 1290–1301 has biased composition (basic residues); it reads AQKKNRNKLRRQ. Positions 1292–1304 are interaction with DAPK1; that stretch reads KKNRNKLRRQHSY. Phosphoserine; by DAPK1 is present on Ser-1303. Residue Tyr-1472 is modified to Phosphotyrosine. The PDZ-binding motif lies at 1480–1482; the sequence is SDV.

It belongs to the glutamate-gated ion channel (TC 1.A.10.1) family. NR2B/GRIN2B subfamily. In terms of assembly, heterotetramer. Forms heterotetrameric channels composed of two GluN1/zeta subunits (GRIN1), and two identical GluN2/epsilon subunits (GRIN2A, GRIN2B, GRIN2C or GRIN2D) or GluN3 subunits (GRIN3A or GRIN3B) (in vitro). Can also form heterotetrameric channels that contain at least two GluN1 subunits and at least two different GluN2 subunits (or a combination of one GluN2 and one GluN3 subunits) (in vitro). In vivo, the subunit composition may depend on the expression levels of the different subunits. Found in a complex with GRIN1, GRIN3A and PPP2CB. Interacts with MAGI3. Interacts with HIP1 and NETO1. Interacts with PDZ domains of PATJ, DLG3 and DLG4. Interacts with DAPK1. Found in a complex with GRIN1 and PRR7. Interacts with PRR7. Interacts with CAMK2A. Interacts with ARC; preventing ARC oligomerization. Interacts with TMEM25. Interacts (via the extreme C-terminus) with FRMPD2 (via the second PDZ domain); the interaction is direct and is likely to promote NMDAR-mediated neural signal transmission. GRIN2A binds FRMPD2 with lower affinity than GRIN2B. Interacts with FAM81A; the interaction facilitates condensate formation via liquid-liquid phase separation. Phosphorylated on tyrosine residues. Phosphorylation at Ser-1303 by DAPK1 enhances synaptic NMDA receptor channel activity. Detected in brain (at protein level). Detected throughout the brain, and in brain stem trigeminal nucleus. Detected in forebrain.

It localises to the cell membrane. Its subcellular location is the postsynaptic cell membrane. The protein resides in the cell projection. It is found in the dendrite. The protein localises to the late endosome. It localises to the lysosome. Its subcellular location is the cytoplasm. The protein resides in the cytoskeleton. It carries out the reaction Ca(2+)(in) = Ca(2+)(out). It catalyses the reaction Na(+)(in) = Na(+)(out). The enzyme catalyses K(+)(in) = K(+)(out). Functionally, component of N-methyl-D-aspartate (NMDA) receptors (NMDARs) that function as heterotetrameric, ligand-gated cation channels with high calcium permeability and voltage-dependent block by Mg(2+). Participates in synaptic plasticity for learning and memory formation by contributing to the long-term depression (LTD) of hippocampus membrane currents. Channel activation requires binding of the neurotransmitter L-glutamate to the GluN2 subunit, glycine or D-serine binding to the GluN1 subunit, plus membrane depolarization to eliminate channel inhibition by Mg(2+). NMDARs mediate simultaneously the potasium efflux and the influx of calcium and sodium. Each GluN2 subunit confers differential attributes to channel properties, including activation, deactivation and desensitization kinetics, pH sensitivity, Ca2(+) permeability, and binding to allosteric modulators. In concert with DAPK1 at extrasynaptic sites, acts as a central mediator for stroke damage. Its phosphorylation at Ser-1303 by DAPK1 enhances synaptic NMDA receptor channel activity inducing injurious Ca2+ influx through them, resulting in an irreversible neuronal death. This Mus musculus (Mouse) protein is Glutamate receptor ionotropic, NMDA 2B.